A 2291-amino-acid chain; its full sequence is Spectrin beta chain (2291 aa).

Residues 1–271 are actin-binding; the sequence is MTTDISIVRW…IITYVVTYYH (271 aa). 2 consecutive Calponin-homology (CH) domains span residues 50 to 154 and 169 to 274; these read SVQK…LRFQ and KSAK…HYFS. 17 Spectrin repeats span residues 300-408, 420-521, 525-633, 636-739, 743-843, 848-948, 954-1057, 1060-1166, 1170-1272, 1276-1376, 1386-1484, 1488-1591, 1594-1697, 1701-1802, 1807-1909, 1913-2015, and 2020-2089; these read VHDY…ALRE, AARF…MRLE, QLQQ…RLEE, KLWQ…RLEN, YFQL…QRLL, LYKL…MDDL, VQTF…KLEE, DLHR…VLLS, DQQL…EKLK, KLHE…GAML, QQTC…KALE, EAFQ…HLLE, KVQQ…RLNE, LFML…TQML, ELHK…QKLA, DLFR…ENLQ, and VYQF…KEMK. Basic and acidic residues predominate over residues 2097–2140; the sequence is EAERQRIKEEQEAKAASEAAEQAKREAERRDDVDVGASHDDSER. Residues 2097–2152 form a disordered region; that stretch reads EAERQRIKEEQEAKAASEAAEQAKREAERRDDVDVGASHDDSERGGTPGAGEGHEG. The region spanning 2147–2259 is the PH domain; the sequence is GEGHEGYVTR…WVTSLKAQSD (113 aa). The residue at position 2195 (Ser-2195) is a Phosphoserine. The span at 2262-2275 shows a compositional bias: polar residues; the sequence is AVAASRSQTLPATS. The disordered stretch occupies residues 2262–2291; the sequence is AVAASRSQTLPATSQKDEPKRRSFFTLKKK.

The protein belongs to the spectrin family. Native spectrin molecule is a tetramer composed of two antiparallel heterodimers joined head to head so that each end of the native molecule includes the C-terminus of the alpha subunit and the N-terminus of the beta subunit.

The protein localises to the cytoplasm. The protein resides in the cytoskeleton. It localises to the cell cortex. Spectrin is the major constituent of the cytoskeletal network underlying the erythrocyte plasma membrane. It associates with band 4.1 and actin to form the cytoskeletal superstructure of the erythrocyte plasma membrane. Interacts with calmodulin in a calcium-dependent manner. This is Spectrin beta chain (beta-Spec) from Drosophila melanogaster (Fruit fly).